We begin with the raw amino-acid sequence, 157 residues long: Small ribosomal subunit protein uS7 (157 aa).

The protein belongs to the universal ribosomal protein uS7 family. Part of the 30S ribosomal subunit. Contacts proteins S9 and S11.

One of the primary rRNA binding proteins, it binds directly to 16S rRNA where it nucleates assembly of the head domain of the 30S subunit. Is located at the subunit interface close to the decoding center, probably blocks exit of the E-site tRNA. This is Small ribosomal subunit protein uS7 from Delftia acidovorans (strain DSM 14801 / SPH-1).